We begin with the raw amino-acid sequence, 404 residues long: Acetate kinase (404 aa).

Asn-7 is a Mg(2+) binding site. Residue Lys-14 coordinates ATP. Residue Arg-91 coordinates substrate. Residue Asp-148 is the Proton donor/acceptor of the active site. ATP is bound by residues 208 to 212 (HLGNG) and 283 to 285 (DLR). Residue Glu-388 participates in Mg(2+) binding.

It belongs to the acetokinase family. In terms of assembly, homodimer. Requires Mg(2+) as cofactor. It depends on Mn(2+) as a cofactor.

The protein resides in the cytoplasm. It catalyses the reaction acetate + ATP = acetyl phosphate + ADP. It participates in metabolic intermediate biosynthesis; acetyl-CoA biosynthesis; acetyl-CoA from acetate: step 1/2. In terms of biological role, catalyzes the formation of acetyl phosphate from acetate and ATP. Can also catalyze the reverse reaction. The protein is Acetate kinase of Borrelia turicatae (strain 91E135).